The chain runs to 357 residues: Multiple sugar-binding periplasmic protein SbpA (357 aa).

A signal peptide spans 1-20 (MSSSFTTTLAGMAVGMLVLA).

This sequence belongs to the bacterial solute-binding protein 2 family.

Its subcellular location is the periplasm. Functionally, mediates chemotaxis towards D-galactose, L-arabinose and D-fucose but not towards D-fructose. Probably part of a binding-protein high affinity uptake system. This chain is Multiple sugar-binding periplasmic protein SbpA (sbpA), found in Azospirillum brasilense.